A 268-amino-acid polypeptide reads, in one-letter code: NH(3)-dependent NAD(+) synthetase (268 aa).

ATP is bound at residue 46–53 (GVSGGQDS). Position 52 (Asp52) interacts with Mg(2+). Arg140 provides a ligand contact to deamido-NAD(+). Thr160 is an ATP binding site. Mg(2+) is bound at residue Glu165. Deamido-NAD(+) contacts are provided by Lys173 and Asp180. An ATP-binding site is contributed by Lys189. Deamido-NAD(+) is bound at residue 260–261 (HK).

The protein belongs to the NAD synthetase family. As to quaternary structure, homodimer.

The catalysed reaction is deamido-NAD(+) + NH4(+) + ATP = AMP + diphosphate + NAD(+) + H(+). It functions in the pathway cofactor biosynthesis; NAD(+) biosynthesis; NAD(+) from deamido-NAD(+) (ammonia route): step 1/1. In terms of biological role, catalyzes the ATP-dependent amidation of deamido-NAD to form NAD. Uses ammonia as a nitrogen source. The protein is NH(3)-dependent NAD(+) synthetase of Buchnera aphidicola subsp. Acyrthosiphon pisum (strain APS) (Acyrthosiphon pisum symbiotic bacterium).